A 410-amino-acid polypeptide reads, in one-letter code: Arginine deiminase (410 aa).

Cysteine 399 (amidino-cysteine intermediate) is an active-site residue.

This sequence belongs to the arginine deiminase family.

The protein localises to the cytoplasm. It carries out the reaction L-arginine + H2O = L-citrulline + NH4(+). It functions in the pathway amino-acid degradation; L-arginine degradation via ADI pathway; carbamoyl phosphate from L-arginine: step 1/2. The protein is Arginine deiminase of Listeria monocytogenes serotype 4a (strain HCC23).